Consider the following 428-residue polypeptide: Somatostatin receptor type 3 (428 aa).

The Extracellular segment spans residues 1-45 (MAAVTYPSSVPTTLDPGNASSAWPLDTSLGNASAGTSLAGLAVSG). Residues N18 and N31 are each glycosylated (N-linked (GlcNAc...) asparagine). A helical membrane pass occupies residues 46 to 71 (ILISLVYLVVCVVGLLGNSLVIYVVL). Over 72-81 (RHTSSPSVTS) the chain is Cytoplasmic. The helical transmembrane segment at 82–103 (VYILNLALADELFMLGLPFLAA) threads the bilayer. At 104–118 (QNALSYWPFGSLMCR) the chain is on the extracellular side. A disulfide bridge connects residues C117 and C192. Residues 119 to 140 (LVMAVDGINQFTSIFCLTVMSV) form a helical membrane-spanning segment. Topologically, residues 141–162 (DRYLAVVHPTRSARWRTAPVAR) are cytoplasmic. The chain crosses the membrane as a helical span at residues 163 to 182 (MVSAAVWVASAVVVLPVVVF). The Extracellular portion of the chain corresponds to 183-206 (SGVPRGMSTCHMQWPEPAAAWRTA). The helical transmembrane segment at 207–232 (FIIYTAALGFFGPLLVICLCYLLIVV) threads the bilayer. Residues 233 to 266 (KVRSTTRRVRAPSCQWVQAPACQRRRRSERRVTR) are Cytoplasmic-facing. The chain crosses the membrane as a helical span at residues 267 to 288 (MVVAVVALFVLCWMPFYLLNIV). Topologically, residues 289–302 (NVVCPLPEEPAFFG) are extracellular. The chain crosses the membrane as a helical span at residues 303–325 (LYFLVVALPYANSCANPILYGFL). Over 326–428 (SYRFKQGFRR…GDKASTLSHL (103 aa)) the chain is Cytoplasmic. A phosphoserine mark is found at S341, S346, and S351. The segment at 343 to 428 (RVRSQEPGSG…GDKASTLSHL (86 aa)) is disordered. T357 carries the phosphothreonine modification. The span at 357–370 (TEEEEDEEEEERRE) shows a compositional bias: acidic residues. Residues 385–412 (RLSQIAQPGPSGQQQRPCTGTAKEQQLL) show a composition bias toward polar residues.

The protein belongs to the G-protein coupled receptor 1 family. Homodimer and heterodimer with SSTR2. Heterodimerization with SSTR2 inactivates SSTR3 receptor function. Post-translationally, phosphorylated. Phosphorylation increases upon somatostatin binding. In terms of tissue distribution, densely expressed in cerebellum and at moderate levels in the amygdala, cortex, striatum, spleen, liver and pituitary.

The protein resides in the cell membrane. Receptor for somatostatin-14 and -28. This receptor is coupled via pertussis toxin sensitive G proteins to inhibition of adenylyl cyclase. The sequence is that of Somatostatin receptor type 3 (Sstr3) from Rattus norvegicus (Rat).